We begin with the raw amino-acid sequence, 289 residues long: DNA repair protein rad14 (289 aa).

Zn(2+)-binding residues include cysteine 116, cysteine 119, cysteine 137, and cysteine 140. A zinc finger lies at 116–140 (CFECDSIELDTKYFDIFHCRVCHTC).

The protein belongs to the XPA family. In terms of assembly, interacts with hrq1.

Its subcellular location is the nucleus. Functionally, involved in nucleotide excision repair (NER). Functional in repair of ultraviolet radiation induced damages and in mitotic mutation avoidance. Binds damaged DNA. Binds specifically to base-base mismatches or small insertion/deletion loops with unpaired nucleotides. Maintains GT repeat stability. Functions as a part of the short-patch excision repair system. This is DNA repair protein rad14 from Schizosaccharomyces pombe (strain 972 / ATCC 24843) (Fission yeast).